The chain runs to 469 residues: MAFPAGFGWAAATAAYQVEGGWDADGKGPCVWDTFTHQGGERVFKNQTGDVACGSYTLWEEDLKCIKQLGLTHYRFSLSWSRLLPDGTTGFINQKGIDYYNKIIDDLLKNGVTPIVTLYHFDLPQTLEDQGGWLSEAIIESFDKYAQFCFSTFGDRVKQWITINEANVLSVMSYDLGMFPPGIPHFGTGGYQAAHNLIKAHARSWHSYDSLFRKKQKGMVSLSLFAVWLEPADPNSVSDQEAAKRAITFHLDLFAKPIFIDGDYPEVVKSQIASMSQKQGYPSSRLPEFTEEEKKMIKGTADFFAVQYYTTRLIKYQENKKGELGILQDAEIEFFPDPSWKNVDWIYVVPWGVCKLLKYIKDTYNNPVIYITENGFPQSDPAPLDDTQRWEYFRQTFQELFKAIQLDKVNLQVYCAWSLLDNFEWNQGYSSRFGLFHVDFEDPARPRVPYTSAKEYAKIIRNNGLEAHL.

Positions 17, 120, and 164 each coordinate substrate. Glu165 acts as the Proton donor in catalysis. Tyr309 contributes to the substrate binding site. Residue Glu373 is the Nucleophile of the active site. Substrate is bound by residues Trp417 and 424-425; that span reads EW.

The protein belongs to the glycosyl hydrolase 1 family. Klotho subfamily. May interact with NEU2. Post-translationally, the N-terminus is blocked. In terms of tissue distribution, present in small intestine (at protein level). Expressed in liver, small intestine, colon, spleen and kidney. Down-regulated in renal cell carcinomas and hepatocellular carcinomas.

Its subcellular location is the cytoplasm. The protein localises to the cytosol. The enzyme catalyses Hydrolysis of terminal, non-reducing beta-D-glucosyl residues with release of beta-D-glucose.. The catalysed reaction is a beta-D-glucosyl-(1&lt;-&gt;1')-N-acylsphing-4-enine + H2O = an N-acylsphing-4-enine + D-glucose. It catalyses the reaction a beta-D-galactosyl-(1&lt;-&gt;1')-N-acylsphing-4-enine + H2O = an N-acylsphing-4-enine + D-galactose. It carries out the reaction beta-D-glucosyl-(1&lt;-&gt;1)-sphing-4-enine + H2O = sphing-4-enine + D-glucose. The enzyme catalyses beta-D-glucosyl-(1&lt;-&gt;1)-N-octadecanoylsphing-4-enine + H2O = N-octadecanoylsphing-4-enine + D-glucose. The catalysed reaction is beta-D-galactosyl-(1&lt;-&gt;1)-sphing-4-enine + H2O = sphing-4-enine + D-galactose. It catalyses the reaction beta-D-galactosyl-(1&lt;-&gt;1')-N-octadecanoylsphing-4-enine + H2O = N-octadecanoylsphing-4-enine + D-galactose. It carries out the reaction a beta-D-xylosyl-(1&lt;-&gt;1')-N-acylsphing-4-enine + cholesterol = cholesteryl 3-beta-D-xyloside + an N-acylsphing-4-enine. Its activity is regulated as follows. Inhibited by 2,4-dinitrophenyl-2-fluoro-2-deoxy-beta-D-glucopyranoside. Inhibited by sodium taurocholate. Inhibited by alpha-1-C-nonyl-DIX/AnDIX. The glucosylceramidase activity is slightly inhibited by conduritol B epoxide/CBE while the galactosylceramidase activity is not. Functionally, neutral cytosolic beta-glycosidase with a broad substrate specificity that could play a role in the catabolism of glycosylceramides. Has a significant glucosylceramidase activity in vitro. However, that activity is relatively low and its significance in vivo is not clear. Hydrolyzes galactosylceramides/GalCers, glucosylsphingosines/GlcSphs and galactosylsphingosines/GalSphs. However, the in vivo relevance of these activities is unclear. It can also hydrolyze a broad variety of dietary glycosides including phytoestrogens, flavonols, flavones, flavanones and cyanogens in vitro and could therefore play a role in the metabolism of xenobiotics. Possesses transxylosylase activity in vitro using xylosylated ceramides/XylCers (such as beta-D-xylosyl-(1&lt;-&gt;1')-N-acylsphing-4-enine) as xylosyl donors and cholesterol as acceptor. Could also play a role in the catabolism of cytosolic sialyl free N-glycans. The protein is Cytosolic beta-glucosidase of Homo sapiens (Human).